The primary structure comprises 421 residues: Synaptotagmin-1 (421 aa).

Residues methionine 1–proline 57 lie on the Vesicular side of the membrane. A glycan (N-linked (GlcNAc...) asparagine) is linked at asparagine 24. A helical transmembrane segment spans residues tryptophan 58–cysteine 79. 5 S-palmitoyl cysteine lipidation sites follow: cysteine 74, cysteine 75, cysteine 77, cysteine 79, and cysteine 82. Over lysine 80–lysine 421 the chain is Cytoplasmic. The interval threonine 112–lysine 141 is disordered. Residues aspartate 121 to lysine 133 are compositionally biased toward acidic residues. Threonine 128 bears the Phosphothreonine mark. Residues glutamate 135 to asparagine 381 form a phospholipid binding region. Positions lysine 141 to arginine 260 constitute a C2 1 domain. Residues leucine 171, aspartate 172, and aspartate 178 each contribute to the Ca(2+) site. Phosphotyrosine is present on tyrosine 229. Residues aspartate 230, phenylalanine 231, aspartate 232, serine 235, lysine 236, and aspartate 238 each coordinate Ca(2+). Serine 264 bears the Phosphoserine mark. Residues lysine 272–histidine 405 form the C2 2 domain. Residues aspartate 303 and aspartate 309 each coordinate Ca(2+). Residues serine 342 and serine 344 each carry the phosphoserine modification. Aspartate 363, aspartate 365, and aspartate 371 together coordinate Ca(2+).

It belongs to the synaptotagmin family. As to quaternary structure, homotetramer. Heterodimer; heterodimerizes with SYT2 in presence of calcium. Interacts with SCAMP5. Interacts with STON2. Forms a complex with SV2B, syntaxin 1 and SNAP25. Interacts with SV2A, SV2B and SV2C. Interacts with RIMS1. Interacts with PRRT2. Interacts with DNAJC5 in a phosphorylation-dependent manner. Interacts (via N-terminus) with RAB3A. Interacts with SYT12. Interacts with calmodulin. Interacts with DNM1 (via C-terminal proline-rich domain (PRD)); this interaction facilitates vesicle fission during clathrin-mediated endocytosis (CME). (Microbial infection) Interacts with C.botulinum neurotoxin type B (BoNT/B, botB). Has lower affinity for BoNT/B than Syt2; mutating its residues to match those in Syt2 increases its affinity. In terms of assembly, (Microbial infection) Interacts with C.botulinum neurotoxin type G (BoNT/G, botG). Requires Ca(2+) as cofactor. In terms of processing, glycosylated. As to expression, expressed in the brain (at protein level). Predominantly expressed in rostral, phylogenetically younger brain regions, and in some endocrine tissues.

The protein resides in the cytoplasmic vesicle. It is found in the secretory vesicle membrane. The protein localises to the secretory vesicle. Its subcellular location is the synaptic vesicle membrane. It localises to the chromaffin granule membrane. The protein resides in the cytoplasm. In terms of biological role, calcium sensor that participates in triggering neurotransmitter release at the synapse. May have a regulatory role in the membrane interactions during trafficking of synaptic vesicles at the active zone of the synapse. It binds acidic phospholipids with a specificity that requires the presence of both an acidic head group and a diacyl backbone. A Ca(2+)-dependent interaction between synaptotagmin and putative receptors for activated protein kinase C has also been reported. It can bind to at least three additional proteins in a Ca(2+)-independent manner; these are neurexins, syntaxin and AP2. Plays a role in dendrite formation by melanocytes. Functionally, (Microbial infection) Receptor for C.botulinum neurotoxin type B (BoNT/B, botB); interaction is improved in the presence of gangliosides. BoNT/B toxin binds to the membrane proximal vesicular domain of Syt1 (residues 32-51). Its function is as follows. (Microbial infection) Receptor for C.botulinum neurotoxin type G (BoNT/G, botG); unlike the case with BoNT/B, interaction is not improved in the presence of gangliosides. BoNT/G toxin binds to the vesicular domain of Syt1 (residues 32-53). This is Synaptotagmin-1 from Rattus norvegicus (Rat).